Here is a 321-residue protein sequence, read N- to C-terminus: Peptidase 1 (321 aa).

Residues 1 to 18 form the signal peptide; sequence MKFVLAIASLLVLSTVYA. The propeptide at 19 to 98 is activation peptide; that stretch reads RPASIKTFEE…LKTQFDLNAE (80 aa). Intrachain disulfides connect Cys-102/Cys-216, Cys-130/Cys-170, and Cys-164/Cys-202. Residue Cys-133 is part of the active site. Asn-151 carries N-linked (GlcNAc...) asparagine glycosylation. Catalysis depends on residues His-269 and Arg-288.

Belongs to the peptidase C1 family. In terms of assembly, monomer.

It localises to the secreted. The enzyme catalyses Broad endopeptidase specificity.. Its function is as follows. Thiol protease that hydrolyzes proteins, with a preference for Phe or basic residues. In Dermatophagoides farinae (American house dust mite), this protein is Peptidase 1 (DERF1).